A 698-amino-acid polypeptide reads, in one-letter code: Sucrose non-fermenting protein kinase 1 (698 aa).

Residues Met-1–Pro-48 are disordered. Residues Tyr-62 to Phe-313 enclose the Protein kinase domain. Residues Leu-68 to Val-76 and Lys-91 contribute to the ATP site. Catalysis depends on Asp-184, which acts as the Proton acceptor. The segment at Tyr-320–Pro-417 is auto-inhibitory domain (AID). The region spanning Val-360 to Asn-397 is the UBA domain. 3 disordered regions span residues Leu-410–Ala-435, Thr-482–Lys-525, and Glu-564–Met-597. The span at Ser-415–Ala-435 shows a compositional bias: low complexity. 2 stretches are compositionally biased toward basic and acidic residues: residues Thr-484–Arg-493 and Glu-564–Glu-573.

Belongs to the protein kinase superfamily. CAMK Ser/Thr protein kinase family. SNF1 subfamily. In terms of assembly, component of the AMP-activated protein kinase complex also known as the SNF1 kinase complex (Snf1c), a heterotrimeric complex composed of a catalytic subunit alpha and 2 regulatory subunits beta and gamma.

It is found in the cytoplasm. Its subcellular location is the nucleus. It catalyses the reaction L-seryl-[protein] + ATP = O-phospho-L-seryl-[protein] + ADP + H(+). The catalysed reaction is L-threonyl-[protein] + ATP = O-phospho-L-threonyl-[protein] + ADP + H(+). Its function is as follows. Catalytic subunit of the AMP-activated protein kinase complex also known as the SNF1 kinase complex (Snf1c), a central regulator of cellular energy homeostasis, which, in response to a fall in intracellular ATP levels, activates energy-producing pathways and inhibits energy-consuming processes. The complex phosphorylates histone H3 to form H3S10ph, which promotes H3K14ac formation, leading to transcriptional activation through TBP recruitment to the promoters. Activates the expression of the galactose oxidase (GOA) gene and of several cell wall-degrading enzymes (CWDEs) such as pectate lyase, xylanase and glucanase. Plays an important role in sudden death syndrome (SDS) by controlling the colonization of the infected roots. The chain is Sucrose non-fermenting protein kinase 1 from Fusarium virguliforme.